The chain runs to 371 residues: Ferrochelatase (371 aa).

Positions 218 and 299 each coordinate Fe cation.

This sequence belongs to the ferrochelatase family.

The protein resides in the cytoplasm. It carries out the reaction heme b + 2 H(+) = protoporphyrin IX + Fe(2+). It participates in porphyrin-containing compound metabolism; protoheme biosynthesis; protoheme from protoporphyrin-IX: step 1/1. Catalyzes the ferrous insertion into protoporphyrin IX. This chain is Ferrochelatase, found in Cupriavidus metallidurans (strain ATCC 43123 / DSM 2839 / NBRC 102507 / CH34) (Ralstonia metallidurans).